The primary structure comprises 229 residues: Clathrin light chain B (229 aa).

Low complexity-rich tracts occupy residues 1–17 (MAED…GAPE) and 45–58 (GAPA…AQPG). Residues 1 to 70 (MAEDFGFFSS…SGAGSEDMST (70 aa)) form a disordered region. Phosphoserine occurs at positions 11 and 13. The interval 93–155 (ADRLTQEPES…QVEKNKINNR (63 aa)) is involved in binding clathrin heavy chain. Phosphothreonine is present on Thr187. A disulfide bridge connects residues Cys199 and Cys209. Residue Lys204 is modified to N6-acetyllysine. Residue Ser217 is modified to Phosphoserine.

The protein belongs to the clathrin light chain family. Clathrin coats are formed from molecules containing 3 heavy chains and 3 light chains. Interacts (via N-terminus) with HIP1. Interacts with HIP1R.

The protein resides in the cytoplasmic vesicle membrane. Its subcellular location is the membrane. It is found in the coated pit. Clathrin is the major protein of the polyhedral coat of coated pits and vesicles. This chain is Clathrin light chain B (Cltb), found in Mus musculus (Mouse).